The primary structure comprises 64 residues: Carnocyclin-A (64 aa).

Positions 1–4 are excised as a propeptide; that stretch reads MLYE. Residues 5–64 constitute a cross-link (cyclopeptide (Leu-Leu)); sequence LVAYGIAQGTAEKVVSLINAGLTVGSIISILGGVTVGLSGVFTAVKAAIAKQGIKKAIQL.

The protein resides in the secreted. In terms of biological role, cyclopeptide antibiotic that inhibits the growth of Gram-positive bacteria, but has no effect on the growth of Gram-negative bacteria. The protein is Carnocyclin-A of Carnobacterium maltaromaticum (Carnobacterium piscicola).